The primary structure comprises 678 residues: Secretin ExeD (678 aa).

Positions 1 to 25 (MINKGKGWRLATVAAALMMAGSAWA) are cleaved as a signal peptide. Residues 26 to 122 (TEYSASFKNA…VVDETNPGIG (97 aa)) form an N0 region. Residues 124–188 (EMVTRVVPVR…EVVRRVDKAG (65 aa)) form an N1 region. Residues 189-264 (DQEVDIIKLK…MVRQLDRDLQ (76 aa)) form an N2 region. The N3 stretch occupies residues 267 to 348 (GNTRVFYLKY…ELEQVVAKLD (82 aa)). The secretin stretch occupies residues 353–602 (QVLVEAIIVE…VFIRPTILRD (250 aa)). A s domain region spans residues 604–678 (NVYSGISSNK…GVQPFVQGNK (75 aa)).

This sequence belongs to the bacterial secretin family. GSP D subfamily. Forms a cylindrical channel with 15 subunits.

The protein localises to the cell outer membrane. Its function is as follows. Involved in a type II secretion system (T2SS, formerly general secretion pathway, GSP) for the export of proteins. This subunit forms the outer membrane channel. The chain is Secretin ExeD (exeD) from Aeromonas hydrophila.